The following is a 136-amino-acid chain: ATP synthase epsilon chain, chloroplastic (136 aa).

The protein belongs to the ATPase epsilon chain family. In terms of assembly, F-type ATPases have 2 components, CF(1) - the catalytic core - and CF(0) - the membrane proton channel. CF(1) has five subunits: alpha(3), beta(3), gamma(1), delta(1), epsilon(1). CF(0) has three main subunits: a, b and c.

It localises to the plastid. It is found in the chloroplast thylakoid membrane. Functionally, produces ATP from ADP in the presence of a proton gradient across the membrane. The polypeptide is ATP synthase epsilon chain, chloroplastic (Tetradesmus obliquus (Green alga)).